Reading from the N-terminus, the 244-residue chain is 7-cyano-7-deazaguanine synthase (244 aa).

F14–V24 contacts ATP. Residues C202, C217, C220, and C223 each coordinate Zn(2+).

Belongs to the QueC family. Zn(2+) is required as a cofactor.

The enzyme catalyses 7-carboxy-7-deazaguanine + NH4(+) + ATP = 7-cyano-7-deazaguanine + ADP + phosphate + H2O + H(+). The protein operates within purine metabolism; 7-cyano-7-deazaguanine biosynthesis. Catalyzes the ATP-dependent conversion of 7-carboxy-7-deazaguanine (CDG) to 7-cyano-7-deazaguanine (preQ(0)). The protein is 7-cyano-7-deazaguanine synthase of Burkholderia mallei (strain NCTC 10229).